A 289-amino-acid chain; its full sequence is MAGAGRGAAVSRVQAGPGSPRRARGRQQVQPLGKQRPAPWPGLRSKEKKKVNCKPKNQDEQEIPFRLREIMRSRQEMKNPISNKKRKKAAQVTFRKTLEKEAKGEEPDIAVPKFKQRKGESDGAYIHRMQQEAQHVLFLSKNQAIRQPEVQAAPKEKSEQKKAKKAFQKRRLDKVRRKKEEKAADRLEQELLRDTVKFGEVVLQPPELTARPQRSVSKDQPGRRSQMLRMLLSPGGVSQPLTASLARQRIVEEERERAVQAYRALKQRQQQLHGERPHLTSRKKPEPQL.

3 disordered regions span residues M1–P64, E149–A184, and Q204–S225. Low complexity predominate over residues G7–P20. S19 carries the phosphoserine modification. A coiled-coil region spans residues K155–K197. Positions K162–R177 are enriched in basic residues. Residue S233 is modified to Phosphoserine. Residues R247–H273 are a coiled coil. Residues L265 to L289 form a disordered region. A compositionally biased stretch (basic and acidic residues) spans H273 to L289.

The protein localises to the chromosome. This Homo sapiens (Human) protein is Coiled-coil domain-containing protein 137 (CCDC137).